Reading from the N-terminus, the 268-residue chain is 4-hydroxy-tetrahydrodipicolinate reductase (268 aa).

NAD(+)-binding positions include 9 to 14, Glu-35, 99 to 101, and 123 to 126; these read GVCGRM, GTT, and APNY. The active-site Proton donor/acceptor is the His-156. A (S)-2,3,4,5-tetrahydrodipicolinate-binding site is contributed by His-157. Residue Lys-160 is the Proton donor of the active site. 166-167 contacts (S)-2,3,4,5-tetrahydrodipicolinate; that stretch reads GT.

It belongs to the DapB family.

The protein resides in the cytoplasm. It carries out the reaction (S)-2,3,4,5-tetrahydrodipicolinate + NAD(+) + H2O = (2S,4S)-4-hydroxy-2,3,4,5-tetrahydrodipicolinate + NADH + H(+). It catalyses the reaction (S)-2,3,4,5-tetrahydrodipicolinate + NADP(+) + H2O = (2S,4S)-4-hydroxy-2,3,4,5-tetrahydrodipicolinate + NADPH + H(+). Its pathway is amino-acid biosynthesis; L-lysine biosynthesis via DAP pathway; (S)-tetrahydrodipicolinate from L-aspartate: step 4/4. Functionally, catalyzes the conversion of 4-hydroxy-tetrahydrodipicolinate (HTPA) to tetrahydrodipicolinate. The polypeptide is 4-hydroxy-tetrahydrodipicolinate reductase (Magnetococcus marinus (strain ATCC BAA-1437 / JCM 17883 / MC-1)).